The chain runs to 180 residues: Nucleoside triphosphate/diphosphate phosphatase (180 aa).

The active-site Proton donor is arginine 26. Residues asparagine 90, aspartate 106, aspartate 108, aspartate 110, aspartate 123, and glutamate 126 each coordinate Mg(2+).

This sequence belongs to the Ntdp family. Requires Mg(2+) as cofactor.

The catalysed reaction is a ribonucleoside 5'-triphosphate + H2O = a ribonucleoside 5'-diphosphate + phosphate + H(+). The enzyme catalyses a ribonucleoside 5'-diphosphate + H2O = a ribonucleoside 5'-phosphate + phosphate + H(+). Has nucleoside phosphatase activity towards nucleoside triphosphates and nucleoside diphosphates. This is Nucleoside triphosphate/diphosphate phosphatase from Staphylococcus aureus (strain MRSA252).